Reading from the N-terminus, the 174-residue chain is Myosin regulatory light chain sqh (174 aa).

Thr21 is subject to Phosphothreonine. At Ser22 the chain carries Phosphoserine. EF-hand domains are found at residues 31–66 (AQIAEFKEAFNMIDQNRDGFVEKEDLHDMLASLGKN) and 100–135 (DPEDVIKNAFGCFDEENMGVLPEDRLRELLTTMGDR). Ca(2+) is bound by residues Asp44, Asn46, Asp48, and Asp55.

Myosin is a hexamer of 2 heavy chains and 4 light chains. Post-translationally, phosphorylation plays a central role in myosin regulation.

Functionally, required for cytokinesis, could regulate contractile ring function. This Drosophila melanogaster (Fruit fly) protein is Myosin regulatory light chain sqh (sqh).